The sequence spans 183 residues: Large ribosomal subunit protein uL6 (183 aa).

The protein belongs to the universal ribosomal protein uL6 family. In terms of assembly, part of the 50S ribosomal subunit.

In terms of biological role, this protein binds to the 23S rRNA, and is important in its secondary structure. It is located near the subunit interface in the base of the L7/L12 stalk, and near the tRNA binding site of the peptidyltransferase center. This Mycoplasmoides gallisepticum (strain R(low / passage 15 / clone 2)) (Mycoplasma gallisepticum) protein is Large ribosomal subunit protein uL6.